A 141-amino-acid chain; its full sequence is Hemoglobin subunit alpha-A (141 aa).

Positions 1–141 (VLSAADKTNV…VGAVLTAKYR (141 aa)) constitute a Globin domain. An O2-binding site is contributed by H58. H87 lines the heme b pocket.

It belongs to the globin family. As to quaternary structure, heterotetramer of two alpha chains and two beta chains. Red blood cells.

Functionally, involved in oxygen transport from the lung to the various peripheral tissues. The protein is Hemoglobin subunit alpha-A (HBAA) of Cygnus olor (Mute swan).